Reading from the N-terminus, the 436-residue chain is DNA-dependent metalloprotease SPRTN (436 aa).

The SprT-like domain occupies 19–186; it reads IRALFLEFND…RTCGGEFVKI (168 aa). H85 is a Zn(2+) binding site. Residue E86 is part of the active site. The Zn(2+) site is built by H89 and H104. Residues 184-219 form a disordered region; that stretch reads VKIKEPENYSQKRKRNNDPTKSELGNSSHVKINKGK. Residues 231-239 carry the SHP-box motif; it reads FSGTGYKLF. The PIP-box signature appears at 271-277; the sequence is QTDSTFL. A disordered region spans residues 300–321; the sequence is GSPIKLPSSSNNKSHQDSSKQK. The UBZ4-type zinc-finger motif lies at 408-435; it reads KVCCPVCGTEIFESKINDHLDTCLQNYN. Residues C411, C414, H426, and C430 each contribute to the Zn(2+) site.

The protein belongs to the Spartan family. As to quaternary structure, homodimer. It depends on Zn(2+) as a cofactor. In terms of processing, autocatalytically cleaved in response to double-stranded DNA-binding: autocatalytic cleavage takes place in trans and leads to inactivation.

It localises to the nucleus. It is found in the chromosome. DNA-binding activates the protease activity: single-stranded DNA-binding specifically activates ability to cleave covalent DNA-protein cross-links (DPCs). In contrast, double-stranded DNA-binding specifically activates autocatalytic cleavage, and subsequent inactivation. In terms of biological role, DNA-dependent metalloendopeptidase that mediates the proteolytic cleavage of covalent DNA-protein cross-links (DPCs) during DNA synthesis, thereby playing a key role in maintaining genomic integrity. DPCs are highly toxic DNA lesions that interfere with essential chromatin transactions, such as replication and transcription, and which are induced by reactive agents, such as UV light or formaldehyde. Associates with the DNA replication machinery and specifically removes DPCs during DNA synthesis. Catalyzes proteolytic cleavage of the hmces DNA-protein cross-link following unfolding by the brip1/fancj helicase. Acts as a pleiotropic protease for DNA-binding proteins cross-linked with DNA, such as top1, top2a, histones H3 and H4. Mediates degradation of DPCs that are not ubiquitinated, while it is not able to degrade ubiquitinated DPCs. SPRTN activation requires polymerase collision with DPCs followed by helicase bypass of DPCs. May also act as a 'reader' of ubiquitinated pcna: facilitates chromatin association of rad18 and is required for efficient pcna monoubiquitination, promoting a feed-forward loop to enhance pcna ubiquitination and translesion DNA synthesis. Acts as a regulator of translesion DNA synthesis by recruiting vcp/p97 to sites of DNA damage. The protein is DNA-dependent metalloprotease SPRTN of Xenopus tropicalis (Western clawed frog).